The primary structure comprises 329 residues: MNNGMQIFDYEDIQMIPNKCVVQSRKEVDTSVKFGPHTFKIPVVPANMQTIIDEPLAIWLAEHDYFYIMHRFQPERRMDFVRDMKKRGLIASISVGVKDDEFDFIEALAANELTPDYITIDIAHGYAQVVIDMIQHIKHYLPNAFVIAGNVGTPEAVRELENAGADATKVGIGPGKVCLTKLKTGFGTGGWQLAAVRWCAKAARKPIIADGGIRNNGDIAKSIRFGATMCMIGSLFAGHEETPGKHVNIDGKEYQEYYGSASEYQKGTHHNVEGKKILLPVKGKIGDTLKEMQEDLQSAVSYAGGRDLESLTKVDYVIVKNSIFNGDQY.

The Thioimidate intermediate role is filled by Cys178. 207 to 230 (IIADGGIRNNGDIAKSIRFGATMC) contributes to the NADP(+) binding site.

The protein belongs to the IMPDH/GMPR family. GuaC type 2 subfamily.

It carries out the reaction IMP + NH4(+) + NADP(+) = GMP + NADPH + 2 H(+). In terms of biological role, catalyzes the irreversible NADPH-dependent deamination of GMP to IMP. It functions in the conversion of nucleobase, nucleoside and nucleotide derivatives of G to A nucleotides, and in maintaining the intracellular balance of A and G nucleotides. In Lacticaseibacillus casei (strain BL23) (Lactobacillus casei), this protein is GMP reductase.